Here is a 306-residue protein sequence, read N- to C-terminus: MRVLFAGTPAVAVPSLDALVEAGFDVVAVLTRPDAPIGRKRVLTPSPVAARAAELGLDVIYAAKVDDAAIEQISAAAPDVAAIVAYGGLVPPAALAIPRHGWINLHFSLLPAWRGAAPVQRSVMAGDDVTGAVTFQLEKGLDTGPVFGTLTEAVGPEDTSGQLLERLSHSGAVLLAQTLSAIETGKASAVPQAGDVSLAPKLTLEDGHLNWHHPALAIGRQARGATPEPGAWTLLDGQRVKLDPVRLRPDVEDLAPGALAFHGKSVLVGTGSHAVELTRIQPAGKKMMAAPDWARGIGSLEGVVFE.

108-111 lines the (6S)-5,6,7,8-tetrahydrofolate pocket; sequence SLLP.

The protein belongs to the Fmt family.

The enzyme catalyses L-methionyl-tRNA(fMet) + (6R)-10-formyltetrahydrofolate = N-formyl-L-methionyl-tRNA(fMet) + (6S)-5,6,7,8-tetrahydrofolate + H(+). Functionally, attaches a formyl group to the free amino group of methionyl-tRNA(fMet). The formyl group appears to play a dual role in the initiator identity of N-formylmethionyl-tRNA by promoting its recognition by IF2 and preventing the misappropriation of this tRNA by the elongation apparatus. In Pseudarthrobacter chlorophenolicus (strain ATCC 700700 / DSM 12829 / CIP 107037 / JCM 12360 / KCTC 9906 / NCIMB 13794 / A6) (Arthrobacter chlorophenolicus), this protein is Methionyl-tRNA formyltransferase.